The chain runs to 276 residues: Ribosomal RNA small subunit methyltransferase A (276 aa).

Asn-16, Leu-18, Gly-43, Glu-64, Asp-89, and Asn-109 together coordinate S-adenosyl-L-methionine.

The protein belongs to the class I-like SAM-binding methyltransferase superfamily. rRNA adenine N(6)-methyltransferase family. RsmA subfamily.

The protein localises to the cytoplasm. The catalysed reaction is adenosine(1518)/adenosine(1519) in 16S rRNA + 4 S-adenosyl-L-methionine = N(6)-dimethyladenosine(1518)/N(6)-dimethyladenosine(1519) in 16S rRNA + 4 S-adenosyl-L-homocysteine + 4 H(+). Functionally, specifically dimethylates two adjacent adenosines (A1518 and A1519) in the loop of a conserved hairpin near the 3'-end of 16S rRNA in the 30S particle. May play a critical role in biogenesis of 30S subunits. This is Ribosomal RNA small subunit methyltransferase A from Marinobacter nauticus (strain ATCC 700491 / DSM 11845 / VT8) (Marinobacter aquaeolei).